The chain runs to 278 residues: Sulfur carrier protein FdhD (278 aa).

Cysteine 113 functions as the Cysteine persulfide intermediate in the catalytic mechanism. 251–256 serves as a coordination point for Mo-bis(molybdopterin guanine dinucleotide); the sequence is FCRNGR.

The protein belongs to the FdhD family.

The protein localises to the cytoplasm. Its function is as follows. Required for formate dehydrogenase (FDH) activity. Acts as a sulfur carrier protein that transfers sulfur from IscS to the molybdenum cofactor prior to its insertion into FDH. This Shewanella oneidensis (strain ATCC 700550 / JCM 31522 / CIP 106686 / LMG 19005 / NCIMB 14063 / MR-1) protein is Sulfur carrier protein FdhD.